The chain runs to 230 residues: Large ribosomal subunit protein uL1 (230 aa).

Belongs to the universal ribosomal protein uL1 family. In terms of assembly, part of the 50S ribosomal subunit.

In terms of biological role, binds directly to 23S rRNA. The L1 stalk is quite mobile in the ribosome, and is involved in E site tRNA release. Protein L1 is also a translational repressor protein, it controls the translation of the L11 operon by binding to its mRNA. The chain is Large ribosomal subunit protein uL1 from Erythrobacter litoralis (strain HTCC2594).